The chain runs to 291 residues: Transcription factor bHLH53 (291 aa).

The bHLH domain maps to 163 to 212; the sequence is PTLSSQSIAARGRRRRIAEKTHELGKLIPGGNKLNTAEMFQAAAKYVKFL.

In terms of assembly, homodimer. As to expression, expressed constitutively in roots, leaves, stems, and flowers.

The protein resides in the nucleus. This is Transcription factor bHLH53 (BHLH53) from Arabidopsis thaliana (Mouse-ear cress).